A 273-amino-acid chain; its full sequence is Coiled-coil domain-containing protein 3 (273 aa).

The first 21 residues, 1-21 (MPLPLLLAALCLAASPAPARA), serve as a signal peptide directing secretion. The N-linked (GlcNAc...) asparagine glycan is linked to N100. The stretch at 188–250 (SVQKALFEEE…VNQKLNEKLG (63 aa)) forms a coiled coil.

In terms of assembly, homodimer. N-glycosylated. Expressed in aorta and adipose tissue. Enriched in mature adipocytes. Over-expressed in adipose tissue from either hormonally-induced or nutritionally-regulated obese mice models.

It localises to the secreted. Its function is as follows. Negatively regulates TNF-alpha-induced pro-inflammatory response in endothelial cells (ECs) via inhibition of TNF-alpha-induced NF-kappaB activation in ECs. Positively regulates lipid accumulation in adipose cells. This Mus musculus (Mouse) protein is Coiled-coil domain-containing protein 3 (Ccdc3).